Reading from the N-terminus, the 466-residue chain is Ribulose bisphosphate carboxylase large chain (466 aa).

Lys-5 carries the N6,N6,N6-trimethyllysine modification. 2 residues coordinate substrate: Asn-114 and Thr-164. Lys-166 serves as the catalytic Proton acceptor. Lys-168 provides a ligand contact to substrate. Lys-192, Asp-194, and Glu-195 together coordinate Mg(2+). Residue Lys-192 is modified to N6-carboxylysine. His-285 acts as the Proton acceptor in catalysis. Arg-286, His-318, and Ser-370 together coordinate substrate.

Belongs to the RuBisCO large chain family. Type I subfamily. As to quaternary structure, heterohexadecamer of 8 large chains and 8 small chains; disulfide-linked. The disulfide link is formed within the large subunit homodimers. Mg(2+) serves as cofactor. In terms of processing, the disulfide bond which can form in the large chain dimeric partners within the hexadecamer appears to be associated with oxidative stress and protein turnover.

Its subcellular location is the plastid. The protein resides in the chloroplast. The enzyme catalyses 2 (2R)-3-phosphoglycerate + 2 H(+) = D-ribulose 1,5-bisphosphate + CO2 + H2O. It carries out the reaction D-ribulose 1,5-bisphosphate + O2 = 2-phosphoglycolate + (2R)-3-phosphoglycerate + 2 H(+). In terms of biological role, ruBisCO catalyzes two reactions: the carboxylation of D-ribulose 1,5-bisphosphate, the primary event in carbon dioxide fixation, as well as the oxidative fragmentation of the pentose substrate in the photorespiration process. Both reactions occur simultaneously and in competition at the same active site. This is Ribulose bisphosphate carboxylase large chain from Tropaeolum majus (Common nasturtium).